A 446-amino-acid chain; its full sequence is Tol-Pal system protein TolB (446 aa).

Residues 1 to 43 form the signal peptide; sequence MRKLWAPNWLSRRQNANPTRDQSRHALMAWLAAALMSAGAAHA.

This sequence belongs to the TolB family. As to quaternary structure, the Tol-Pal system is composed of five core proteins: the inner membrane proteins TolA, TolQ and TolR, the periplasmic protein TolB and the outer membrane protein Pal. They form a network linking the inner and outer membranes and the peptidoglycan layer.

It localises to the periplasm. Functionally, part of the Tol-Pal system, which plays a role in outer membrane invagination during cell division and is important for maintaining outer membrane integrity. The polypeptide is Tol-Pal system protein TolB (Cupriavidus metallidurans (strain ATCC 43123 / DSM 2839 / NBRC 102507 / CH34) (Ralstonia metallidurans)).